The primary structure comprises 392 residues: O-phospho-L-seryl-tRNA:Cys-tRNA synthase 1 (392 aa).

Pyridoxal 5'-phosphate-binding positions include 85 to 86, asparagine 190, and 213 to 215; these read AR and SGH. N6-(pyridoxal phosphate)lysine is present on lysine 216.

Belongs to the SepCysS family. Homodimer. Interacts with SepRS. Requires pyridoxal 5'-phosphate as cofactor.

The enzyme catalyses O-phospho-L-seryl-tRNA(Cys) + hydrogen sulfide + H(+) = L-cysteinyl-tRNA(Cys) + phosphate. In terms of biological role, converts O-phospho-L-seryl-tRNA(Cys) (Sep-tRNA(Cys)) to L-cysteinyl-tRNA(Cys) (Cys-tRNA(Cys)). The polypeptide is O-phospho-L-seryl-tRNA:Cys-tRNA synthase 1 (Methanocorpusculum labreanum (strain ATCC 43576 / DSM 4855 / Z)).